The following is a 191-amino-acid chain: Peptidyl-tRNA hydrolase (191 aa).

Tyrosine 14 serves as a coordination point for tRNA. Residue histidine 19 is the Proton acceptor of the active site. The tRNA site is built by tyrosine 64, asparagine 66, and asparagine 112.

Belongs to the PTH family. As to quaternary structure, monomer.

Its subcellular location is the cytoplasm. It carries out the reaction an N-acyl-L-alpha-aminoacyl-tRNA + H2O = an N-acyl-L-amino acid + a tRNA + H(+). Its function is as follows. Hydrolyzes ribosome-free peptidyl-tRNAs (with 1 or more amino acids incorporated), which drop off the ribosome during protein synthesis, or as a result of ribosome stalling. In terms of biological role, catalyzes the release of premature peptidyl moieties from peptidyl-tRNA molecules trapped in stalled 50S ribosomal subunits, and thus maintains levels of free tRNAs and 50S ribosomes. The polypeptide is Peptidyl-tRNA hydrolase (Clostridium beijerinckii (strain ATCC 51743 / NCIMB 8052) (Clostridium acetobutylicum)).